Reading from the N-terminus, the 80-residue chain is Probable antimicrobial peptide clone Con10 (80 aa).

The N-terminal stretch at 1–24 is a signal peptide; that stretch reads MQYKTKTFLVIFLAYLVVTNEAEA. The propeptide occupies 56–80; the sequence is EIEDFFDPYQRELDLELERLLSQLQ.

This sequence belongs to the non-disulfide-bridged peptide (NDBP) superfamily. Medium-length antimicrobial peptide (group 3) family. As to expression, expressed by the venom gland.

It localises to the secreted. The protein localises to the target cell membrane. Its function is as follows. Antimicrobial peptide. Has antifungal activity against all strains tested (MIC=12.5-200 uM). May act by disrupting the integrity of the bacterial cell membrane. The sequence is that of Probable antimicrobial peptide clone Con10 from Opisthacanthus cayaporum (South American scorpion).